The sequence spans 270 residues: NADPH-dependent 7-cyano-7-deazaguanine reductase (270 aa).

79-81 (IES) contacts substrate. 81 to 82 (SK) contributes to the NADPH binding site. Residue cysteine 177 is the Thioimide intermediate of the active site. Aspartate 184 serves as the catalytic Proton donor. Residue 216 to 217 (HE) participates in substrate binding. 245–246 (RG) contacts NADPH.

This sequence belongs to the GTP cyclohydrolase I family. QueF type 2 subfamily. As to quaternary structure, homodimer.

Its subcellular location is the cytoplasm. The catalysed reaction is 7-aminomethyl-7-carbaguanine + 2 NADP(+) = 7-cyano-7-deazaguanine + 2 NADPH + 3 H(+). It participates in tRNA modification; tRNA-queuosine biosynthesis. In terms of biological role, catalyzes the NADPH-dependent reduction of 7-cyano-7-deazaguanine (preQ0) to 7-aminomethyl-7-deazaguanine (preQ1). This is NADPH-dependent 7-cyano-7-deazaguanine reductase from Acinetobacter baumannii (strain AB307-0294).